We begin with the raw amino-acid sequence, 173 residues long: Bifunctional protein PyrR (173 aa).

Positions 93-105 (VILVDDVLYTGRT) match the PRPP-binding motif.

This sequence belongs to the purine/pyrimidine phosphoribosyltransferase family. PyrR subfamily. Homodimer and homohexamer; in equilibrium.

The enzyme catalyses UMP + diphosphate = 5-phospho-alpha-D-ribose 1-diphosphate + uracil. In terms of biological role, regulates transcriptional attenuation of the pyrimidine nucleotide (pyr) operon by binding in a uridine-dependent manner to specific sites on pyr mRNA. This disrupts an antiterminator hairpin in the RNA and favors formation of a downstream transcription terminator, leading to a reduced expression of downstream genes. Also displays a weak uracil phosphoribosyltransferase activity which is not physiologically significant. In Streptococcus uberis (strain ATCC BAA-854 / 0140J), this protein is Bifunctional protein PyrR.